Reading from the N-terminus, the 756-residue chain is Protein psiP (756 aa).

The first 23 residues, 1–23 (MFIQRTFLKVLTLLSIVTVLVHG), serve as a signal peptide directing secretion. At 24 to 692 (QTQPKDKITL…NCNTGAVVST (669 aa)) the chain is on the extracellular side. An N-linked (GlcNAc...) asparagine glycan is attached at Asn82. Residues 126–281 (LNWNGEAYEY…VDYCGVCEGD (156 aa)) form the PA14 domain. Residues Asn359, Asn483, Asn564, and Asn663 are each glycosylated (N-linked (GlcNAc...) asparagine). Residues 693–713 (AVIAGSTVAGAVALGIFLYGG) traverse the membrane as a helical segment. The Cytoplasmic segment spans residues 714 to 756 (KKGYDYWKDSRNISMGSSNSNPLYEEQQTGRGVNPMYDDPAAN). Over residues 730-744 (SSNSNPLYEEQQTGR) the composition is skewed to polar residues. The disordered stretch occupies residues 730–756 (SSNSNPLYEEQQTGRGVNPMYDDPAAN).

It belongs to the prespore-cell-inducing factor family.

Its subcellular location is the membrane. The sequence is that of Protein psiP (psiP) from Dictyostelium discoideum (Social amoeba).